A 605-amino-acid polypeptide reads, in one-letter code: Elongation factor 4 (605 aa).

One can recognise a tr-type G domain in the interval 11 to 193 (KCIRNFSIIA…QIVTRISPPQ (183 aa)). GTP-binding positions include 23-28 (DHGKST) and 140-143 (NKVD).

The protein belongs to the TRAFAC class translation factor GTPase superfamily. Classic translation factor GTPase family. LepA subfamily.

Its subcellular location is the cell membrane. It catalyses the reaction GTP + H2O = GDP + phosphate + H(+). In terms of biological role, required for accurate and efficient protein synthesis under certain stress conditions. May act as a fidelity factor of the translation reaction, by catalyzing a one-codon backward translocation of tRNAs on improperly translocated ribosomes. Back-translocation proceeds from a post-translocation (POST) complex to a pre-translocation (PRE) complex, thus giving elongation factor G a second chance to translocate the tRNAs correctly. Binds to ribosomes in a GTP-dependent manner. This is Elongation factor 4 from Aster yellows witches'-broom phytoplasma (strain AYWB).